The sequence spans 146 residues: Hemoglobin subunit beta (146 aa).

The residue at position 1 (valine 1) is an N-acetylvaline. Residues 2 to 146 (HLSGEEKAAV…VANALAHKYH (145 aa)) enclose the Globin domain. At threonine 12 the chain carries Phosphothreonine. Serine 44 carries the post-translational modification Phosphoserine. An N6-acetyllysine modification is found at lysine 59. Residue histidine 63 participates in heme b binding. N6-acetyllysine is present on lysine 82. Histidine 92 is a binding site for heme b. Cysteine 93 carries the post-translational modification S-nitrosocysteine. At lysine 144 the chain carries N6-acetyllysine.

Belongs to the globin family. As to quaternary structure, heterotetramer of two alpha chains and two beta chains. In terms of tissue distribution, red blood cells.

Its function is as follows. Involved in oxygen transport from the lung to the various peripheral tissues. The polypeptide is Hemoglobin subunit beta (HBB) (Tupaia glis (Common tree shrew)).